The sequence spans 257 residues: Acetylglutamate kinase (257 aa).

Residues 43 to 44 (GG), Arg65, and Asn157 each bind substrate. ATP contacts are provided by residues 180 to 185 (DVSGIL) and 208 to 210 (IIT).

This sequence belongs to the acetylglutamate kinase family. ArgB subfamily. In terms of assembly, homodimer.

Its subcellular location is the cytoplasm. It catalyses the reaction N-acetyl-L-glutamate + ATP = N-acetyl-L-glutamyl 5-phosphate + ADP. It participates in amino-acid biosynthesis; L-arginine biosynthesis; N(2)-acetyl-L-ornithine from L-glutamate: step 2/4. Its function is as follows. Catalyzes the ATP-dependent phosphorylation of N-acetyl-L-glutamate. This chain is Acetylglutamate kinase, found in Salmonella agona (strain SL483).